We begin with the raw amino-acid sequence, 781 residues long: Ubiquitin carboxyl-terminal hydrolase 14 (781 aa).

The segment at 169-279 (STCPHTENFQ…SALQIYGINI (111 aa)) adopts a UBP-type zinc-finger fold. Zn(2+) is bound by residues cysteine 171, histidine 173, cysteine 192, cysteine 195, cysteine 204, cysteine 207, cysteine 212, histidine 224, histidine 228, histidine 235, cysteine 253, and cysteine 256. The USP domain occupies 323-781 (CGLINLGNSC…NGYIYFYTRC (459 aa)). Cysteine 332 (nucleophile) is an active-site residue. UBA domains follow at residues 576–626 (DEDE…LFQH) and 649–689 (EVDE…VFNN). Histidine 737 acts as the Proton acceptor in catalysis.

This sequence belongs to the peptidase C19 family.

The protein localises to the cytoplasm. It is found in the nucleus. The enzyme catalyses Thiol-dependent hydrolysis of ester, thioester, amide, peptide and isopeptide bonds formed by the C-terminal Gly of ubiquitin (a 76-residue protein attached to proteins as an intracellular targeting signal).. Functionally, required for the adaptation to the presence of glucose in the growth medium; mediates the degradation of enzymes involved in gluconeogenesis when cells are shifted to glucose-containing medium. Required for proteasome-dependent catabolite degradation of fructose-1,6-bisphosphatase (FBP1). Accelerates proteasomal breakdown of ubiquitinated proteins as it disassembles free ubiquitin chains that would compete with ubiquitinated proteins to bind to the proteasome. The chain is Ubiquitin carboxyl-terminal hydrolase 14 (UBP14) from Saccharomyces cerevisiae (strain ATCC 204508 / S288c) (Baker's yeast).